The following is a 1011-amino-acid chain: MHSMISSVDVKSEVPVGLEPISPLDLRTDLRMMMPVVDPVVREKQLQQELLLIQQQQQIQKQLLIAEFQKQHENLTRQHQAQLQEHIKELLAIKQQQELLEKEQKLEQQRQEQEVERHRREQQLPPLRGKDRGRERAVASTEVKQKLQEFLLSKSATKDTPTNGKNHSVSRHPKLWYTAAHHTSLDQSSPPLSGTSPSYKYTLPGAQDAKDDFPLRKTASEPNLKVRSRLKQKVAERRSSPLLRRKDGNVVTSFKKRMFEVTESSVSSSSPGSGPSSPNNGPTGSVTENETSVLPPTPHAEQMVSQQRILIHEDSMNLLSLYTSPSLPNITLGLPAVPSQLNASNSLKEKQKCETQTLRQGVPLPGQYGGSIPASSSHPHVTLEGKPPNSSHQALLQHLLLKEQMRQQKLLVAGGVPLHPQSPLATKERISPGIRGTHKLPRHRPLNRTQSAPLPQSTLAQLVIQQQHQQFLEKQKQYQQQIHMNKLLSKSIEQLKQPGSHLEEAEEELQGDQAMQEDRAPSSGNSTRSDSSACVDDTLGQVGAVKVKEEPVDSDEDAQIQEMESGEQAAFMQQPFLEPTHTRALSVRQAPLAAVGMDGLEKHRLVSRTHSSPAASVLPHPAMDRPLQPGSATGIAYDPLMLKHQCVCGNSTTHPEHAGRIQSIWSRLQETGLLNKCERIQGRKASLEEIQLVHSEHHSLLYGTNPLDGQKLDPRILLGDDSQKFFSSLPCGGLGVDSDTIWNELHSSGAARMAVGCVIELASKVASGELKNGFAVVRPPGHHAEESTAMGFCFFNSVAITAKYLRDQLNISKILIVDLDVHHGNGTQQAFYADPSILYISLHRYDEGNFFPGSGAPNEVGTGLGEGYNINIAWTGGLDPPMGDVEYLEAFRTIVKPVAKEFDPDMVLVSAGFDALEGHTPPLGGYKVTAKCFGHLTKQLMTLADGRVVLALEGGHDLTAICDASEACVNALLGNELEPLAEDILHQSPNMNAVISLQKIIEIQSMSLKFS.

Ser-22 carries the post-translational modification Phosphoserine. The segment at 23–27 (PLDLR) is interaction with CTBP1. Disordered stretches follow at residues 110–139 (RQEQ…RAVA), 183–249 (TSLD…KDGN), and 262–304 (TESS…EQMV). The interaction with MEF2 stretch occupies residues 136-154 (RAVASTEVKQKLQEFLLSK). Residues 175-343 (LWYTAAHHTS…LPAVPSQLNA (169 aa)) form an interaction with MAPK10 region. The span at 185–199 (LDQSSPPLSGTSPSY) shows a compositional bias: polar residues. Basic and acidic residues predominate over residues 208–219 (DAKDDFPLRKTA). Residues 218-261 (TASEPNLKVRSRLKQKVAERRSSPLLRRKDGNVVTSFKKRMFEV) are interaction with ETV6. 2 positions are modified to phosphoserine: Ser-220 and Ser-240. Positions 233–248 (KVAERRSSPLLRRKDG) are enriched in basic and acidic residues. Positions 262–285 (TESSVSSSSPGSGPSSPNNGPTGS) are enriched in low complexity. Phosphoserine is present on Ser-451. The interval 494–536 (QLKQPGSHLEEAEEELQGDQAMQEDRAPSSGNSTRSDSSACVD) is disordered. Over residues 522–532 (SSGNSTRSDSS) the composition is skewed to polar residues. Ser-554 carries the phosphoserine modification. Residues 631–978 (SATGIAYDPL…VNALLGNELE (348 aa)) are histone deacetylase. Residues Cys-646, Cys-648, His-654, and Cys-731 each contribute to the Zn(2+) site. The active site involves His-783.

This sequence belongs to the histone deacetylase family. HD type 2 subfamily. Homodimer. Interacts with CTBP1. The phosphorylated form interacts with 14-3-3. Interacts with HDAC1 and HDAC3, and probably with HDAC4 and HDAC5. Interacts with MEF2, MAPK10, ETV6, NCOR1 and BCL6. Interacts with FOXP3 in the absence of T-cell stimulation. Phosphorylated on Ser-220 and Ser-450; which promotes 14-3-3-binding, impairs interaction with MEF2, and antagonizes antimyogenic activity. Phosphorylated on Ser-240; which impairs nuclear accumulation. Isoform 7 is phosphorylated on Tyr-1010. Phosphorylated by the PKC kinases PKN1 and PKN2, impairing nuclear import. In terms of processing, sumoylated. As to expression, broadly expressed, with highest levels in brain, heart, muscle and testis. Isoform 3 is present in human bladder carcinoma cells (at protein level).

The protein resides in the nucleus. The catalysed reaction is N(6)-acetyl-L-lysyl-[histone] + H2O = L-lysyl-[histone] + acetate. Its activity is regulated as follows. Inhibited by Trichostatin A (TSA) and suberoylanilide hydroxamic acid. In terms of biological role, responsible for the deacetylation of lysine residues on the N-terminal part of the core histones (H2A, H2B, H3 and H4). Histone deacetylation gives a tag for epigenetic repression and plays an important role in transcriptional regulation, cell cycle progression and developmental events. Represses MEF2-dependent transcription. Its function is as follows. Isoform 3 lacks active site residues and therefore is catalytically inactive. Represses MEF2-dependent transcription by recruiting HDAC1 and/or HDAC3. Seems to inhibit skeletal myogenesis and to be involved in heart development. Protects neurons from apoptosis, both by inhibiting JUN phosphorylation by MAPK10 and by repressing JUN transcription via HDAC1 recruitment to JUN promoter. The sequence is that of Histone deacetylase 9 (HDAC9) from Homo sapiens (Human).